Reading from the N-terminus, the 141-residue chain is Large ribosomal subunit protein bL17 (141 aa).

It belongs to the bacterial ribosomal protein bL17 family. In terms of assembly, part of the 50S ribosomal subunit. Contacts protein L32.

This Rhizobium meliloti (strain 1021) (Ensifer meliloti) protein is Large ribosomal subunit protein bL17.